A 125-amino-acid polypeptide reads, in one-letter code: Small ribosomal subunit protein uS13 (125 aa).

Residues 93–125 are disordered; the sequence is RKGLPVRGQRTKTNARTRKGPKRTVAGKKKAGR.

This sequence belongs to the universal ribosomal protein uS13 family. In terms of assembly, part of the 30S ribosomal subunit. Forms a loose heterodimer with protein S19. Forms two bridges to the 50S subunit in the 70S ribosome.

Located at the top of the head of the 30S subunit, it contacts several helices of the 16S rRNA. In the 70S ribosome it contacts the 23S rRNA (bridge B1a) and protein L5 of the 50S subunit (bridge B1b), connecting the 2 subunits; these bridges are implicated in subunit movement. Contacts the tRNAs in the A and P-sites. The chain is Small ribosomal subunit protein uS13 from Arthrobacter sp. (strain FB24).